A 200-amino-acid chain; its full sequence is MASRRHNNLNAKLVLLGDMGAGKSSLVIRFVKGQFLEFQESTIGAAFFSSTVSVNNATVKFEIWDTAGQERYHSLAPMYYRGAAAAIIVYDITSTESLARAKKWVQELQKQGNPNMVMALAGNKADLEDKRKVTAEEARLYAEENGLFFMETSAKTATNVNDIFYEIAKRLPRAQPAQNPAGMVLEDKPAQGSQAASCCT.

Residues 17–25 (GDMGAGKSS), 36–42 (LEFQEST), 65–69 (DTAGQ), 123–126 (NKAD), and 153–155 (SAK) contribute to the GTP site. The short motif at 39-47 (QESTIGAAF) is the Effector region element. S-geranylgeranyl cysteine attachment occurs at residues Cys198 and Cys199.

The protein belongs to the small GTPase superfamily. Rab family. As to expression, virtually not expressed in leaves, higher in stems and roots, and highest in flowers.

The protein resides in the cell membrane. In terms of biological role, protein transport. Probably involved in vesicular traffic. The sequence is that of Ras-related protein Rab5 (RAB5) from Nicotiana tabacum (Common tobacco).